The following is a 434-amino-acid chain: D-amino acid dehydrogenase (434 aa).

3-17 serves as a coordination point for FAD; that stretch reads VLVLGSGVIGTTSAW.

Belongs to the DadA oxidoreductase family. FAD serves as cofactor.

It carries out the reaction a D-alpha-amino acid + A + H2O = a 2-oxocarboxylate + AH2 + NH4(+). Its pathway is amino-acid degradation; D-alanine degradation; NH(3) and pyruvate from D-alanine: step 1/1. Functionally, oxidative deamination of D-amino acids. The protein is D-amino acid dehydrogenase of Stenotrophomonas maltophilia (strain K279a).